The primary structure comprises 64 residues: Conotoxin Leo-T1 (64 aa).

The first 22 residues, 1 to 22 (MRCLPVFIILLLLIPSAPSVDA), serve as a signal peptide directing secretion. Positions 23–48 (QPKTEDDVPLASLHDNAKLTLQGLWD) are excised as a propeptide.

The protein belongs to the conotoxin T superfamily. Post-translationally, contains 2 disulfide bonds that can be either 'C1-C3, C2-C4' or 'C1-C4, C2-C3', since these disulfide connectivities have been observed for conotoxins with cysteine framework V (for examples, see AC P0DQQ7 and AC P81755). Expressed by the venom duct.

The protein resides in the secreted. The sequence is that of Conotoxin Leo-T1 from Conus leopardus (Leopard cone).